A 165-amino-acid polypeptide reads, in one-letter code: E3 ubiquitin ligase complex SCF subunit sconC (165 aa).

The interval 106–165 (ILAANYLDIKALLDVGCKTVANMIKGKSPEEIRKTFNIQNDFTPEEEDQIRRENEWAEDR) is interaction with the F-box domain of F-box proteins.

The protein belongs to the SKP1 family. In terms of assembly, component of the SCF (SKP1-CUL1-F-box protein) E3 ubiquitin ligase complexes.

The protein operates within protein modification; protein ubiquitination. In terms of biological role, essential component of the SCF (SKP1-CUL1-F-box protein) E3 ubiquitin ligase complexes, which mediate the ubiquitination and subsequent proteasomal degradation of target proteins. Controls sulfur metabolite repression, probably by mediating the inactivation or degradation of the metR transcription factor. The sequence is that of E3 ubiquitin ligase complex SCF subunit sconC (sconC) from Arthroderma otae (Microsporum canis).